We begin with the raw amino-acid sequence, 92 residues long: Sec-independent protein translocase protein TatA (92 aa).

The chain crosses the membrane as a helical span at residues 1–21 (MGIFDWKHWIVILVVVVLVFG). The tract at residues 44-92 (NDDEKPADPVVNPVPPAQPVHPQATQPITERRTFDVQAEKVEEPTRKDS) is disordered. Residues 72 to 92 (TERRTFDVQAEKVEEPTRKDS) are compositionally biased toward basic and acidic residues.

This sequence belongs to the TatA/E family. The Tat system comprises two distinct complexes: a TatABC complex, containing multiple copies of TatA, TatB and TatC subunits, and a separate TatA complex, containing only TatA subunits. Substrates initially bind to the TatABC complex, which probably triggers association of the separate TatA complex to form the active translocon.

Its subcellular location is the cell inner membrane. Its function is as follows. Part of the twin-arginine translocation (Tat) system that transports large folded proteins containing a characteristic twin-arginine motif in their signal peptide across membranes. TatA could form the protein-conducting channel of the Tat system. This chain is Sec-independent protein translocase protein TatA, found in Pseudomonas fluorescens (strain SBW25).